A 458-amino-acid polypeptide reads, in one-letter code: ATP-dependent protease ATPase subunit HslU (458 aa).

ATP-binding positions include Val18, 60 to 65, Asp270, Glu335, and Arg407; that span reads GVGKTE.

Belongs to the ClpX chaperone family. HslU subfamily. In terms of assembly, a double ring-shaped homohexamer of HslV is capped on each side by a ring-shaped HslU homohexamer. The assembly of the HslU/HslV complex is dependent on binding of ATP.

The protein localises to the cytoplasm. Its function is as follows. ATPase subunit of a proteasome-like degradation complex; this subunit has chaperone activity. The binding of ATP and its subsequent hydrolysis by HslU are essential for unfolding of protein substrates subsequently hydrolyzed by HslV. HslU recognizes the N-terminal part of its protein substrates and unfolds these before they are guided to HslV for hydrolysis. The polypeptide is ATP-dependent protease ATPase subunit HslU (Desulfitobacterium hafniense (strain DSM 10664 / DCB-2)).